We begin with the raw amino-acid sequence, 127 residues long: Small ribosomal subunit protein uS12m (127 aa).

Belongs to the universal ribosomal protein uS12 family.

The protein localises to the mitochondrion. This is Small ribosomal subunit protein uS12m (RPS12) from Acanthamoeba castellanii (Amoeba).